We begin with the raw amino-acid sequence, 161 residues long: MERHFEKVEEILKKYGYKRENLIKILLEIQEIYRYLPEDVINYVSTAMGIPPAKIYGVATFYAQFSLKPKGKYTIMVCDGTACHMAGSPEVLKAIEEETGLTPGNVTEDLMFSLDQVGCLGACALAPVMVINGEVYGNLTADKVKEILRKIKEKERESANV.

Cysteine 78, cysteine 83, cysteine 119, and cysteine 123 together coordinate [2Fe-2S] cluster.

Belongs to the complex I 24 kDa subunit family. As to quaternary structure, heterotrimer composed of HydA (alpha subunit), HydB (beta subunit) and HydC (gamma subunit). Near neutral and acidic pH conditions favor oligomerization of the heterotrimeric holoenzyme. [2Fe-2S] cluster serves as cofactor.

Its subcellular location is the cytoplasm. The enzyme catalyses 2 H2 + 2 oxidized [2Fe-2S]-[ferredoxin] + NAD(+) = 2 reduced [2Fe-2S]-[ferredoxin] + NADH + 3 H(+). Functionally, catalyzes the oxidation of the physiological electron carriers NADH and reduced ferredoxin, coupled to the production of H(2). Acts as a bifurcating [FeFe] hydrogenase, which uses the exergonic oxidation of reduced ferredoxin to drive the unfavorable oxidation of NADH to produce H(2). The gamma subunit might be the site where reduced ferredoxin is oxidized. This Thermotoga maritima (strain ATCC 43589 / DSM 3109 / JCM 10099 / NBRC 100826 / MSB8) protein is Bifurcating [FeFe] hydrogenase gamma subunit.